A 901-amino-acid chain; its full sequence is Schlafen family member 11 (901 aa).

Residues Glu-209 and Glu-214 each coordinate Mg(2+). Lys-216 is a catalytic residue. The Zn(2+) site is built by His-285, Cys-287, Cys-321, and Cys-322. Residue 599-606 (GLPGSGKT) coordinates ATP.

The protein belongs to the Schlafen family. Subgroup III subfamily. As to quaternary structure, homodimer. Interacts with MCM3. Interacts with DHX9. Interacts with RPA1. It depends on Mg(2+) as a cofactor. In terms of tissue distribution, exhibits a wider expression range in ovarian and colon adenocarcinoma than in their corresponding healthy tissues.

The protein localises to the nucleus. The protein resides in the chromosome. Inhibitor of DNA replication that promotes cell death in response to DNA damage. Acts as a guardian of the genome by killing cells with defective replication. Persistently blocks stressed replication forks by opening chromatin across replication initiation sites at stressed replication forks, possibly leading to unwind DNA ahead of the MCM helicase and block fork progression, ultimately leading to cell death. Upon DNA damage, inhibits translation of ATR or ATM based on distinct codon usage without disrupting early DNA damage response signaling. Antiviral restriction factor with manganese-dependent type II tRNA endoribonuclease. A single tRNA molecule is bound and cleaved by the SLFN11 dimer. Specifically abrogates the production of retroviruses such as human immunodeficiency virus 1 (HIV-1) by acting as a specific inhibitor of the synthesis of retroviruses encoded proteins in a codon-usage-dependent manner. Impairs the replication of human cytomegalovirus (HCMV) and some Flaviviruses. Exploits the unique viral codon bias towards A/T nucleotides. Also acts as an interferon (IFN)-induced antiviral protein which acts as an inhibitor of retrovirus protein synthesis. The polypeptide is Schlafen family member 11 (Homo sapiens (Human)).